The primary structure comprises 438 residues: UDP-N-acetylmuramoylalanine--D-glutamate ligase (438 aa).

Residue 105 to 111 (GSNGKTT) coordinates ATP.

This sequence belongs to the MurCDEF family.

It localises to the cytoplasm. The enzyme catalyses UDP-N-acetyl-alpha-D-muramoyl-L-alanine + D-glutamate + ATP = UDP-N-acetyl-alpha-D-muramoyl-L-alanyl-D-glutamate + ADP + phosphate + H(+). It functions in the pathway cell wall biogenesis; peptidoglycan biosynthesis. Functionally, cell wall formation. Catalyzes the addition of glutamate to the nucleotide precursor UDP-N-acetylmuramoyl-L-alanine (UMA). In Oenococcus oeni (strain ATCC BAA-331 / PSU-1), this protein is UDP-N-acetylmuramoylalanine--D-glutamate ligase.